The following is a 506-amino-acid chain: ATP synthase subunit alpha (506 aa).

170-177 is an ATP binding site; it reads GDRQTGKT.

This sequence belongs to the ATPase alpha/beta chains family. F-type ATPases have 2 components, CF(1) - the catalytic core - and CF(0) - the membrane proton channel. CF(1) has five subunits: alpha(3), beta(3), gamma(1), delta(1), epsilon(1). CF(0) has four main subunits: a(1), b(1), b'(1) and c(9-12).

The protein resides in the cellular thylakoid membrane. The catalysed reaction is ATP + H2O + 4 H(+)(in) = ADP + phosphate + 5 H(+)(out). In terms of biological role, produces ATP from ADP in the presence of a proton gradient across the membrane. The alpha chain is a regulatory subunit. In Synechococcus sp. (strain CC9902), this protein is ATP synthase subunit alpha.